A 122-amino-acid polypeptide reads, in one-letter code: LYR motif-containing protein 1 (122 aa).

It belongs to the complex I LYR family.

The sequence is that of LYR motif-containing protein 1 (lyrm1) from Xenopus laevis (African clawed frog).